The following is a 463-amino-acid chain: Glycogen synthase (463 aa).

K15 lines the ADP-alpha-D-glucose pocket.

This sequence belongs to the glycosyltransferase 1 family. Bacterial/plant glycogen synthase subfamily.

The catalysed reaction is [(1-&gt;4)-alpha-D-glucosyl](n) + ADP-alpha-D-glucose = [(1-&gt;4)-alpha-D-glucosyl](n+1) + ADP + H(+). The protein operates within glycan biosynthesis; glycogen biosynthesis. Its function is as follows. Synthesizes alpha-1,4-glucan chains using ADP-glucose. The polypeptide is Glycogen synthase (Aquifex aeolicus (strain VF5)).